A 470-amino-acid polypeptide reads, in one-letter code: MAAVASGQLTQNPLQKVWVPLSLHRLRRRGSTVPQFTNCPTMVILVGLRRPGKTYISRKLTRYLNWIGMPTRVFNVGQYRREAVQSYKNYEFFRHDNEEAMQIRRQCALAALQDVRTYLSSEEGQVAVFDATNTTRERRALIMQFARENGYKVLFVESICDDPAIIEENIKQVKLSSPDYKGCTPEEAVADFLQRIECYKATYEPLDEQLDSGLSYIKIFDVGVRYLANRVQGHVQSRTVYYLMNTHVTPRAIYLSRHGESQLNLKGRIGGDAGLSTRGRQYAQALAEFIRSQSIRELKVWTSHMKRTIETAEALGVPYEQWKALNEIDAGVCEEMTYEEIQERYPEEFALRDQDKYRYRYPKGESYEDLVQRLEPVIMELERQENVLVICHQAVMRCLLAYFLDKSSEELPYLRCPLHTVLKLTPVAYGCEVESIFLNVEAVNTHRERPQNVDISRPPAEALVTVPEHY.

Residues 1–249 (MAAVASGQLT…VYYLMNTHVT (249 aa)) are 6-phosphofructo-2-kinase. Position 31 is a phosphoserine; by PKA (Ser-31). Position 47-55 (47-55 (GLRRPGKTY)) interacts with ATP. Residues Arg-80 and Arg-104 each contribute to the beta-D-fructose 6-phosphate site. Residue Asp-130 is part of the active site. The beta-D-fructose 6-phosphate site is built by Thr-132 and Arg-138. Cys-160 is an active-site residue. 169–174 (NIKQVK) provides a ligand contact to ATP. Beta-D-fructose 6-phosphate-binding residues include Lys-174, Arg-195, and Tyr-199. Residues 250 to 469 (PRAIYLSRHG…AEALVTVPEH (220 aa)) are fructose-2,6-bisphosphatase. Arg-257 serves as a coordination point for beta-D-fructose 2,6-bisphosphate. Catalysis depends on His-258, which acts as the Tele-phosphohistidine intermediate. Residues Asn-264 and Gly-270 each coordinate beta-D-fructose 2,6-bisphosphate. Glu-327 acts as the Proton donor/acceptor in catalysis. Beta-D-fructose 2,6-bisphosphate-binding residues include Tyr-338, Arg-352, Lys-356, Tyr-367, Gln-393, and Arg-397. 349–352 (FALR) is a binding site for ATP. ATP contacts are provided by residues 393-397 (QAVMR) and Tyr-429.

The protein in the C-terminal section; belongs to the phosphoglycerate mutase family. Homodimer. In terms of tissue distribution, liver.

It catalyses the reaction beta-D-fructose 2,6-bisphosphate + H2O = beta-D-fructose 6-phosphate + phosphate. The catalysed reaction is beta-D-fructose 6-phosphate + ATP = beta-D-fructose 2,6-bisphosphate + ADP + H(+). With respect to regulation, phosphorylation results in inhibition of the kinase activity. Its function is as follows. Synthesis and degradation of fructose 2,6-bisphosphate. This chain is 6-phosphofructo-2-kinase/fructose-2,6-bisphosphatase, found in Gallus gallus (Chicken).